An 858-amino-acid chain; its full sequence is Ubiquitin carboxyl-terminal hydrolase 5 (858 aa).

Position 2 is an N-acetylalanine (Ala-2). Positions 73 to 98 (LRRTRRPKEEDTSAGTGDPPRKKPTR) are disordered. Lys-113 participates in a covalent cross-link: Glycyl lysine isopeptide (Lys-Gly) (interchain with G-Cter in SUMO). 2 positions are modified to phosphoserine: Ser-149 and Ser-156. Residues 175–283 (QVSKHAFNLK…EHLSHFGIDM (109 aa)) form a UBP-type; degenerate zinc finger. A disulfide bond links Cys-195 and Cys-816. Zn(2+) contacts are provided by Cys-199 and Cys-202. Trp-209 serves as a coordination point for substrate. Cys-219 is a Zn(2+) binding site. 221 to 224 (RRYF) lines the substrate pocket. His-232 provides a ligand contact to Zn(2+). Positions 259, 261, and 264 each coordinate substrate. The residue at position 292 (Thr-292) is a Phosphothreonine. The region spanning 326–856 (TGIRNLGNSC…LGYIYFYQRV (531 aa)) is the USP domain. The Nucleophile role is filled by Cys-335. At Thr-623 the chain carries Phosphothreonine. UBA domains lie at 654-695 (MLDE…VMSH) and 722-762 (PPPE…IFSH). Phosphoserine is present on residues Ser-779, Ser-783, and Ser-785. His-818 acts as the Proton acceptor in catalysis.

The protein belongs to the peptidase C19 family. In terms of assembly, homodimer. Interacts with TRIML1. In terms of processing, SUMOylated at Lys-113; SUMOylation affects the interaction with Cav3.2 channels. Post-translationally, ubiquitinated by SMURF1; leading to proteasomal degradation.

The protein resides in the cytoplasm. It localises to the stress granule. It is found in the nucleus. It catalyses the reaction Thiol-dependent hydrolysis of ester, thioester, amide, peptide and isopeptide bonds formed by the C-terminal Gly of ubiquitin (a 76-residue protein attached to proteins as an intracellular targeting signal).. Deubiquitinating enzyme that participates in a wide range of cellular processes by specifically cleaving isopeptide bonds between ubiquitin and substrate proteins or ubiquitin itself. Affects thereby important cellular signaling pathways such as NF-kappa-B, Wnt/beta-catenin, and cytokine production by regulating ubiquitin-dependent protein degradation. Participates in the activation of the Wnt signaling pathway by promoting FOXM1 deubiquitination and stabilization that induces the recruitment of beta-catenin to Wnt target gene promoter. Regulates the assembly and disassembly of heat-induced stress granules by mediating the hydrolysis of unanchored ubiquitin chains. Promotes lipopolysaccharide-induced apoptosis and inflammatory response by stabilizing the TXNIP protein. Affects T-cell biology by stabilizing the inhibitory receptor on T-cells PDC1. Acts as a negative regulator of autophagy by regulating ULK1 at both protein and mRNA levels. Acts also as a negative regulator of type I interferon production by simultaneously removing both 'Lys-48'-linked unanchored and 'Lys-63'-linked anchored polyubiquitin chains on the transcription factor IRF3. Modulates the stability of DNA mismatch repair protein MLH1 and counteracts the effect of the ubiquitin ligase UBR4. Upon activation by insulin, it gets phosphorylated through mTORC1-mediated phosphorylation to enhance YTHDF1 stability by removing 'Lys-11'-linked polyubiquitination. May also deubiquitinate other substrates such as the calcium channel CACNA1H. This is Ubiquitin carboxyl-terminal hydrolase 5 (Usp5) from Mus musculus (Mouse).